The chain runs to 288 residues: Putative branched-chain-amino-acid aminotransferase (288 aa).

Lys-146 bears the N6-(pyridoxal phosphate)lysine mark.

This sequence belongs to the class-IV pyridoxal-phosphate-dependent aminotransferase family. Pyridoxal 5'-phosphate serves as cofactor.

The catalysed reaction is L-leucine + 2-oxoglutarate = 4-methyl-2-oxopentanoate + L-glutamate. It catalyses the reaction L-isoleucine + 2-oxoglutarate = (S)-3-methyl-2-oxopentanoate + L-glutamate. The enzyme catalyses L-valine + 2-oxoglutarate = 3-methyl-2-oxobutanoate + L-glutamate. It functions in the pathway amino-acid biosynthesis; L-isoleucine biosynthesis; L-isoleucine from 2-oxobutanoate: step 4/4. It participates in amino-acid biosynthesis; L-leucine biosynthesis; L-leucine from 3-methyl-2-oxobutanoate: step 4/4. Its pathway is amino-acid biosynthesis; L-valine biosynthesis; L-valine from pyruvate: step 4/4. Functionally, acts on leucine, isoleucine and valine. This chain is Putative branched-chain-amino-acid aminotransferase (ilvE), found in Methanocaldococcus jannaschii (strain ATCC 43067 / DSM 2661 / JAL-1 / JCM 10045 / NBRC 100440) (Methanococcus jannaschii).